The chain runs to 272 residues: Ribosomal RNA small subunit methyltransferase A (272 aa).

S-adenosyl-L-methionine is bound by residues N18, L20, G45, E66, D91, and N113.

This sequence belongs to the class I-like SAM-binding methyltransferase superfamily. rRNA adenine N(6)-methyltransferase family. RsmA subfamily.

It localises to the cytoplasm. The enzyme catalyses adenosine(1518)/adenosine(1519) in 16S rRNA + 4 S-adenosyl-L-methionine = N(6)-dimethyladenosine(1518)/N(6)-dimethyladenosine(1519) in 16S rRNA + 4 S-adenosyl-L-homocysteine + 4 H(+). Specifically dimethylates two adjacent adenosines (A1518 and A1519) in the loop of a conserved hairpin near the 3'-end of 16S rRNA in the 30S particle. May play a critical role in biogenesis of 30S subunits. This chain is Ribosomal RNA small subunit methyltransferase A, found in Photorhabdus laumondii subsp. laumondii (strain DSM 15139 / CIP 105565 / TT01) (Photorhabdus luminescens subsp. laumondii).